Here is a 145-residue protein sequence, read N- to C-terminus: Large ribosomal subunit protein uL11 (145 aa).

The protein belongs to the universal ribosomal protein uL11 family. As to quaternary structure, part of the ribosomal stalk of the 50S ribosomal subunit. Interacts with L10 and the large rRNA to form the base of the stalk. L10 forms an elongated spine to which L12 dimers bind in a sequential fashion forming a multimeric L10(L12)X complex. Post-translationally, one or more lysine residues are methylated.

Forms part of the ribosomal stalk which helps the ribosome interact with GTP-bound translation factors. The polypeptide is Large ribosomal subunit protein uL11 (Rickettsia peacockii (strain Rustic)).